The chain runs to 185 residues: Elongation factor P (185 aa).

Belongs to the elongation factor P family.

It localises to the cytoplasm. It participates in protein biosynthesis; polypeptide chain elongation. Its function is as follows. Involved in peptide bond synthesis. Stimulates efficient translation and peptide-bond synthesis on native or reconstituted 70S ribosomes in vitro. Probably functions indirectly by altering the affinity of the ribosome for aminoacyl-tRNA, thus increasing their reactivity as acceptors for peptidyl transferase. This is Elongation factor P from Microcystis aeruginosa (strain NIES-843 / IAM M-2473).